Consider the following 217-residue polypeptide: UPF0319 protein HS_1349 (217 aa).

The first 21 residues, Met-1 to Ala-21, serve as a signal peptide directing secretion.

The protein belongs to the UPF0319 family.

This chain is UPF0319 protein HS_1349, found in Histophilus somni (strain 129Pt) (Haemophilus somnus).